The chain runs to 316 residues: Apolipoprotein E (316 aa).

A signal peptide spans 1–18 (MKVLWVALVITLLAGCQA). 8 tandem repeats follow at residues 79 to 100 (VLMD…GQLA), 101 to 122 (PIAQ…ARLA), 123 to 144 (SDME…AMMG), 145 to 166 (QTTD…KRLL), 167 to 188 (RDAE…EGSE), 189 to 210 (RSVS…ARAA), 211 to 232 (TVGT…QKLR), and 233 to 254 (GRVE…EQLE). Positions 79–254 (VLMDETMKEV…HLEEMREQLE (176 aa)) are 8 X 22 AA approximate tandem repeats. Methionine 142 carries the methionine sulfoxide modification. The interval 157-167 (HLRKLRKRLLR) is LDL and other lipoprotein receptors binding. 161–164 (LRKR) contacts heparin. Residues 209–289 (AATVGTLASQ…SWFEPLVEDM (81 aa)) are lipid-binding and lipoprotein association. Residue 228 to 235 (HQKLRGRV) participates in heparin binding. Residues 265-316 (SQMRLQAEAFQARLKSWFEPLVEDMQRQWAGLVEKVQLAMATSSTSAPSENH) are homooligomerization. A specificity for association with VLDL region spans residues 277-289 (RLKSWFEPLVEDM).

It belongs to the apolipoprotein A1/A4/E family. Homotetramer. May interact with ABCA1; functionally associated with ABCA1 in the biogenesis of HDLs. May interact with APP/A4 amyloid-beta peptide; the interaction is extremely stable in vitro but its physiological significance is unclear. May interact with MAPT. May interact with MAP2. In the cerebrospinal fluid, interacts with secreted SORL1. Interacts with PMEL; this allows the loading of PMEL luminal fragment on ILVs to induce fibril nucleation. APOE exists as multiple glycosylated and sialylated glycoforms within cells and in plasma. The extent of glycosylation and sialylation are tissue and context specific. In terms of processing, glycated in plasma VLDL. Post-translationally, phosphorylated by FAM20C in the extracellular medium.

It localises to the secreted. It is found in the extracellular space. The protein localises to the extracellular matrix. The protein resides in the extracellular vesicle. Its subcellular location is the endosome. It localises to the multivesicular body. APOE is an apolipoprotein, a protein associating with lipid particles, that mainly functions in lipoprotein-mediated lipid transport between organs via the plasma and interstitial fluids. APOE is a core component of plasma lipoproteins and is involved in their production, conversion and clearance. Apolipoproteins are amphipathic molecules that interact both with lipids of the lipoprotein particle core and the aqueous environment of the plasma. As such, APOE associates with chylomicrons, chylomicron remnants, very low density lipoproteins (VLDL) and intermediate density lipoproteins (IDL) but shows a preferential binding to high-density lipoproteins (HDL). It also binds a wide range of cellular receptors including the LDL receptor/LDLR and the very low-density lipoprotein receptor/VLDLR that mediate the cellular uptake of the APOE-containing lipoprotein particles. Finally, APOE also has a heparin-binding activity and binds heparan-sulfate proteoglycans on the surface of cells, a property that supports the capture and the receptor-mediated uptake of APOE-containing lipoproteins by cells. This is Apolipoprotein E (APOE) from Lipotes vexillifer (Yangtze river dolphin).